A 159-amino-acid chain; its full sequence is Acetolactate synthase small subunit (159 aa).

Residues 5-79 form the ACT domain; the sequence is ILSILLENES…DVLKVTEIED (75 aa).

It belongs to the acetolactate synthase small subunit family. As to quaternary structure, dimer of large and small chains.

The enzyme catalyses 2 pyruvate + H(+) = (2S)-2-acetolactate + CO2. It participates in amino-acid biosynthesis; L-isoleucine biosynthesis; L-isoleucine from 2-oxobutanoate: step 1/4. Its pathway is amino-acid biosynthesis; L-valine biosynthesis; L-valine from pyruvate: step 1/4. In Buchnera aphidicola subsp. Baizongia pistaciae (strain Bp), this protein is Acetolactate synthase small subunit (ilvH).